The sequence spans 364 residues: tRNA 2-selenouridine synthase (364 aa).

The Rhodanese domain maps to 14 to 137 (LLADTPLIDV…LRQTAIQATW (124 aa)). The active-site S-selanylcysteine intermediate is cysteine 97.

This sequence belongs to the SelU family. Monomer.

It carries out the reaction 5-methylaminomethyl-2-thiouridine(34) in tRNA + selenophosphate + (2E)-geranyl diphosphate + H2O + H(+) = 5-methylaminomethyl-2-selenouridine(34) in tRNA + (2E)-thiogeraniol + phosphate + diphosphate. It catalyses the reaction 5-methylaminomethyl-2-thiouridine(34) in tRNA + (2E)-geranyl diphosphate = 5-methylaminomethyl-S-(2E)-geranyl-thiouridine(34) in tRNA + diphosphate. The catalysed reaction is 5-methylaminomethyl-S-(2E)-geranyl-thiouridine(34) in tRNA + selenophosphate + H(+) = 5-methylaminomethyl-2-(Se-phospho)selenouridine(34) in tRNA + (2E)-thiogeraniol. The enzyme catalyses 5-methylaminomethyl-2-(Se-phospho)selenouridine(34) in tRNA + H2O = 5-methylaminomethyl-2-selenouridine(34) in tRNA + phosphate. Involved in the post-transcriptional modification of the uridine at the wobble position (U34) of tRNA(Lys), tRNA(Glu) and tRNA(Gln). Catalyzes the conversion of 2-thiouridine (S2U-RNA) to 2-selenouridine (Se2U-RNA). Acts in a two-step process involving geranylation of 2-thiouridine (S2U) to S-geranyl-2-thiouridine (geS2U) and subsequent selenation of the latter derivative to 2-selenouridine (Se2U) in the tRNA chain. The chain is tRNA 2-selenouridine synthase from Salmonella dublin (strain CT_02021853).